The primary structure comprises 115 residues: Protein translation factor SUI1 homolog (115 aa).

Belongs to the SUI1 family.

Probably involved in translation. The sequence is that of Protein translation factor SUI1 homolog (TIF) from Zea mays (Maize).